A 143-amino-acid polypeptide reads, in one-letter code: Large ribosomal subunit protein uL15 (143 aa).

The segment at 1–45 is disordered; that stretch reads MLLNTVQPGVGAKHAKRRVGRGIGSGLGKTCGRGHKGQKSRAGGF. Gly residues predominate over residues 21–31; it reads RGIGSGLGKTC.

Belongs to the universal ribosomal protein uL15 family. In terms of assembly, part of the 50S ribosomal subunit.

In terms of biological role, binds to the 23S rRNA. This Chromobacterium violaceum (strain ATCC 12472 / DSM 30191 / JCM 1249 / CCUG 213 / NBRC 12614 / NCIMB 9131 / NCTC 9757 / MK) protein is Large ribosomal subunit protein uL15.